We begin with the raw amino-acid sequence, 365 residues long: Eukaryotic translation initiation factor 3 subunit H (365 aa).

Positions 11-160 constitute an MPN domain; the sequence is VKVEALVVMK…LRAFRLSPKF (150 aa).

The protein belongs to the eIF-3 subunit H family. Component of the eukaryotic translation initiation factor 3 (eIF-3) complex.

Its subcellular location is the cytoplasm. Component of the eukaryotic translation initiation factor 3 (eIF-3) complex, which is involved in protein synthesis of a specialized repertoire of mRNAs and, together with other initiation factors, stimulates binding of mRNA and methionyl-tRNAi to the 40S ribosome. The eIF-3 complex specifically targets and initiates translation of a subset of mRNAs involved in cell proliferation. This Aspergillus clavatus (strain ATCC 1007 / CBS 513.65 / DSM 816 / NCTC 3887 / NRRL 1 / QM 1276 / 107) protein is Eukaryotic translation initiation factor 3 subunit H.